A 229-amino-acid chain; its full sequence is 2-C-methyl-D-erythritol 4-phosphate cytidylyltransferase (229 aa).

The protein belongs to the IspD/TarI cytidylyltransferase family. IspD subfamily.

It catalyses the reaction 2-C-methyl-D-erythritol 4-phosphate + CTP + H(+) = 4-CDP-2-C-methyl-D-erythritol + diphosphate. The protein operates within isoprenoid biosynthesis; isopentenyl diphosphate biosynthesis via DXP pathway; isopentenyl diphosphate from 1-deoxy-D-xylulose 5-phosphate: step 2/6. Catalyzes the formation of 4-diphosphocytidyl-2-C-methyl-D-erythritol from CTP and 2-C-methyl-D-erythritol 4-phosphate (MEP). The chain is 2-C-methyl-D-erythritol 4-phosphate cytidylyltransferase from Neisseria meningitidis serogroup A / serotype 4A (strain DSM 15465 / Z2491).